A 615-amino-acid polypeptide reads, in one-letter code: Extracellular metalloproteinase 1 (615 aa).

The signal sequence occupies residues 1–8; that stretch reads SLPLHVLA. Positions 9–235 are excised as a propeptide; that stretch reads HPQPSTSTSL…VHNVVDYVAH (227 aa). An N-linked (GlcNAc...) asparagine glycan is attached at Asn276. His419 provides a ligand contact to Zn(2+). Glu420 is a catalytic residue. Position 423 (His423) interacts with Zn(2+). N-linked (GlcNAc...) asparagine glycosylation is found at Asn464, Asn583, and Asn612.

Belongs to the peptidase M36 family. Requires Zn(2+) as cofactor.

The protein resides in the secreted. Functionally, secreted metalloproteinase probably acting as a virulence factor. This chain is Extracellular metalloproteinase 1 (MEP1), found in Trichophyton equinum (Horse ringworm fungus).